Here is a 247-residue protein sequence, read N- to C-terminus: 6-carboxyhexanoate--CoA ligase (247 aa).

Belongs to the BioW family. In terms of assembly, homodimer. Mg(2+) serves as cofactor.

The catalysed reaction is heptanedioate + ATP + CoA = 6-carboxyhexanoyl-CoA + AMP + diphosphate. Its pathway is metabolic intermediate metabolism; pimeloyl-CoA biosynthesis; pimeloyl-CoA from pimelate: step 1/1. In terms of biological role, catalyzes the transformation of pimelate into pimeloyl-CoA with concomitant hydrolysis of ATP to AMP. This is 6-carboxyhexanoate--CoA ligase from Persephonella marina (strain DSM 14350 / EX-H1).